A 324-amino-acid chain; its full sequence is UPF0158 protein CPn_0518/CP_0235/CPj0518/CpB0539 (324 aa).

The protein belongs to the UPF0158 family.

The sequence is that of UPF0158 protein CPn_0518/CP_0235/CPj0518/CpB0539 from Chlamydia pneumoniae (Chlamydophila pneumoniae).